Consider the following 1232-residue polypeptide: Anoctamin-8 (1232 aa).

A disordered region spans residues 1–32 (MAEAASGAGGTSLEGERGKRPPPEGEPAAPAS). Alanine 2 is modified (N-acetylalanine). Residues 2 to 244 (AEAASGAGGT…DDICDYFGVK (243 aa)) lie on the Extracellular side of the membrane. Positions 14-23 (EGERGKRPPP) are enriched in basic and acidic residues. The helical transmembrane segment at 245-265 (IAMYFAWLGFYTSAMVYPAVF) threads the bilayer. The Cytoplasmic portion of the chain corresponds to 266–281 (GSVLYTFTEADQTSRD). Residues 282–302 (VSCVVFALFNVIWSTLFLEEW) form a helical membrane-spanning segment. The Extracellular segment spans residues 303–356 (KRRGAELAYKWGTLDSPGEAVEEPRPQFRGVRRISPITRAEEFYYPPWKRLLFQ). Serine 318 carries the phosphoserine modification. Residues 357 to 377 (LLVSLPLCLACLVCVFLLMLG) form a helical membrane-spanning segment. Residues 378–400 (CFQLQELVLSVKGLPRLARFLPK) lie on the Cytoplasmic side of the membrane. The chain crosses the membrane as a helical span at residues 401–421 (VMLALLVSVSAEGYKKLAIWL). Residues 422-437 (NDMENYRLESAYEKHL) are Extracellular-facing. A helical membrane pass occupies residues 438 to 458 (IIKVVLFQFVNSYLSLFYIGF). Over 459–750 (YLKDMERLKE…YEDTFQDYQE (292 aa)) the chain is Cytoplasmic. The segment at 524–650 (RRLEPQADEG…SPTMVEKGLE (127 aa)) is disordered. Positions 532–551 (EGGGGGSGGGGRRCLSGGCG) are enriched in gly residues. A compositionally biased stretch (acidic residues) spans 582–606 (EEDEDDEEEEDEEEEEDEEEGEEGG). At serine 669 the chain carries Phosphoserine. The interval 681 to 728 (RAGGEGRDQGPDGGPDPEPGSNSDSTRRQRRQNRSSWIDPPEEEHSPQ) is disordered. A helical membrane pass occupies residues 751-771 (MFVQFGYVVLFSSAFPLAALC). Residues 772–807 (ALVNNLIEIRSDAFKLCTGLQRPFGQRVESIGQWQK) are Extracellular-facing. Phosphoserine; by FAM20C is present on serine 801. Residues 808–828 (VMEAMGVLAIVVNCYLIGQCG) form a helical membrane-spanning segment. The Cytoplasmic portion of the chain corresponds to 829–841 (QLQRLFPWLSPEA). A helical membrane pass occupies residues 842 to 862 (AIVSVVVLEHFALLLKYLIHV). Over 863-1232 (AIPDIPGWVA…QAVCWPSGWH (370 aa)) the chain is Extracellular. 3 disordered regions span residues 888–970 (RHER…GSLL), 997–1152 (LAAA…WQWD), and 1174–1232 (PPCA…SGWH). Positions 904 to 932 (RREEEERQRHAEHHARREHDSGGREEARA) are enriched in basic and acidic residues. 2 stretches are compositionally biased toward low complexity: residues 933–953 (EGSGLDPATSSEKASAKAKGS) and 997–1006 (LAAAGAGATT). Arginine 1020 bears the Asymmetric dimethylarginine; alternate mark. Arginine 1020 is subject to Omega-N-methylarginine; alternate. The segment covering 1031–1043 (KSPETRRDSERSH) has biased composition (basic and acidic residues). The span at 1078–1087 (TPSSGSSRVQ) shows a compositional bias: polar residues. 2 stretches are compositionally biased toward pro residues: residues 1130–1145 (PAPPPPMPLPRPPTPP) and 1197–1221 (LPPPPLPPTSDPLETPAPSPSPSPS).

The protein belongs to the anoctamin family. As to expression, expressed in embryonic stem cells, fetal brain and neural tissues.

It is found in the cell membrane. In terms of biological role, does not exhibit calcium-activated chloride channel (CaCC) activity. The polypeptide is Anoctamin-8 (ANO8) (Homo sapiens (Human)).